The following is a 316-amino-acid chain: Glutamyl-Q tRNA(Asp) synthetase (316 aa).

Residues 13–17 and Asp-49 each bind L-glutamate; that span reads RFAPS. The 'HIGH' region motif lies at 16-26; the sequence is PSPSGDLHFGS. Residues Cys-105, Cys-107, Tyr-119, and Cys-123 each coordinate Zn(2+). The L-glutamate site is built by Tyr-176 and Arg-194. Positions 232-236 match the 'KMSKS' region motif; it reads KLSKQ. Lys-235 serves as a coordination point for ATP.

This sequence belongs to the class-I aminoacyl-tRNA synthetase family. GluQ subfamily. Zn(2+) is required as a cofactor.

Functionally, catalyzes the tRNA-independent activation of glutamate in presence of ATP and the subsequent transfer of glutamate onto a tRNA(Asp). Glutamate is transferred on the 2-amino-5-(4,5-dihydroxy-2-cyclopenten-1-yl) moiety of the queuosine in the wobble position of the QUC anticodon. This chain is Glutamyl-Q tRNA(Asp) synthetase, found in Photorhabdus laumondii subsp. laumondii (strain DSM 15139 / CIP 105565 / TT01) (Photorhabdus luminescens subsp. laumondii).